Consider the following 699-residue polypeptide: Elongation factor G 1 (699 aa).

The tr-type G domain occupies 8–290 (ERYRNIGICA…AVIEYLPSPI (283 aa)). GTP-binding positions include 17 to 24 (AHVDAGKT), 88 to 92 (DTPGH), and 142 to 145 (NKMD).

This sequence belongs to the TRAFAC class translation factor GTPase superfamily. Classic translation factor GTPase family. EF-G/EF-2 subfamily.

The protein localises to the cytoplasm. In terms of biological role, catalyzes the GTP-dependent ribosomal translocation step during translation elongation. During this step, the ribosome changes from the pre-translocational (PRE) to the post-translocational (POST) state as the newly formed A-site-bound peptidyl-tRNA and P-site-bound deacylated tRNA move to the P and E sites, respectively. Catalyzes the coordinated movement of the two tRNA molecules, the mRNA and conformational changes in the ribosome. The sequence is that of Elongation factor G 1 from Vibrio vulnificus (strain YJ016).